A 232-amino-acid chain; its full sequence is 2,3,4,5-tetrahydropyridine-2,6-dicarboxylate N-acetyltransferase (232 aa).

It belongs to the transferase hexapeptide repeat family. DapH subfamily.

The enzyme catalyses (S)-2,3,4,5-tetrahydrodipicolinate + acetyl-CoA + H2O = L-2-acetamido-6-oxoheptanedioate + CoA. It participates in amino-acid biosynthesis; L-lysine biosynthesis via DAP pathway; LL-2,6-diaminopimelate from (S)-tetrahydrodipicolinate (acetylase route): step 1/3. Its function is as follows. Catalyzes the transfer of an acetyl group from acetyl-CoA to tetrahydrodipicolinate. This Kosmotoga olearia (strain ATCC BAA-1733 / DSM 21960 / TBF 19.5.1) protein is 2,3,4,5-tetrahydropyridine-2,6-dicarboxylate N-acetyltransferase.